A 323-amino-acid chain; its full sequence is Elongation factor P--(R)-beta-lysine ligase (323 aa).

76–78 contacts substrate; it reads SPE. ATP is bound by residues 100–102 and Asn109; that span reads RNE. Residue Tyr118 participates in substrate binding. 242–243 contacts ATP; it reads EL. Glu249 is a substrate binding site. Gly298 lines the ATP pocket.

It belongs to the class-II aminoacyl-tRNA synthetase family. EpmA subfamily. As to quaternary structure, homodimer.

It catalyses the reaction D-beta-lysine + L-lysyl-[protein] + ATP = N(6)-((3R)-3,6-diaminohexanoyl)-L-lysyl-[protein] + AMP + diphosphate + H(+). Functionally, with EpmB is involved in the beta-lysylation step of the post-translational modification of translation elongation factor P (EF-P). Catalyzes the ATP-dependent activation of (R)-beta-lysine produced by EpmB, forming a lysyl-adenylate, from which the beta-lysyl moiety is then transferred to the epsilon-amino group of a conserved specific lysine residue in EF-P. The sequence is that of Elongation factor P--(R)-beta-lysine ligase from Pasteurella multocida (strain Pm70).